A 356-amino-acid polypeptide reads, in one-letter code: Arginine kinase 1 (356 aa).

In terms of domain architecture, Phosphagen kinase N-terminal spans 6-91 (VLAKLEEGYA…FDPIIEDYHG (86 aa)). 64-68 (GVGIY) serves as a coordination point for substrate. The 238-residue stretch at 119–356 (YVISTRVRCG…TELIKLEKSL (238 aa)) folds into the Phosphagen kinase C-terminal domain. ATP contacts are provided by residues 122 to 126 (STRVR) and His185. Position 225 (Glu225) interacts with substrate. Arg229 serves as a coordination point for ATP. Residue Cys271 participates in substrate binding. ATP-binding positions include 280–284 (RASVH) and 309–314 (RGTRGE). Glu314 contributes to the substrate binding site.

It belongs to the ATP:guanido phosphotransferase family.

The enzyme catalyses L-arginine + ATP = N(omega)-phospho-L-arginine + ADP + H(+). The chain is Arginine kinase 1 from Drosophila melanogaster (Fruit fly).